Here is a 305-residue protein sequence, read N- to C-terminus: Phosphoinositol dihydroceramide synthase (305 aa).

Positions 1 to 23 (MPSKKETLTVIVIMALFLLLTAA) are cleaved as a signal peptide. C24 is lipidated: N-palmitoyl cysteine. C24 is lipidated: S-diacylglycerol cysteine. 6 helical membrane passes run 41–61 (LFFA…FAIF), 117–137 (VFAG…GLCL), 149–169 (FALV…IHPA), 216–236 (FAAV…YAII), 241–261 (WYVI…AIYS), and 266–286 (IIDV…FEYG).

Its subcellular location is the membrane. The catalysed reaction is N-(2-hydroxy-fatty acyl)-dihydroceramide + a 1,2-diacyl-sn-glycero-3-phospho-(1D-myo-inositol) = inositol-1-phospho-N-(2-hydroxy-fatty acyl)-dihydroceramide + a 1,2-diacyl-sn-glycerol. Functionally, catalyzes the addition of a phosphorylinositol group onto dihydroceramide to form phosphoinositol dihydroceramide (PI-DHC), an essential step in sphingolipid biosynthesis. The polypeptide is Phosphoinositol dihydroceramide synthase (Bacteroides thetaiotaomicron (strain ATCC 29148 / DSM 2079 / JCM 5827 / CCUG 10774 / NCTC 10582 / VPI-5482 / E50)).